The sequence spans 86 residues: Small ribosomal subunit protein bS20 (86 aa).

The protein belongs to the bacterial ribosomal protein bS20 family.

Functionally, binds directly to 16S ribosomal RNA. The polypeptide is Small ribosomal subunit protein bS20 (Rhodococcus jostii (strain RHA1)).